The sequence spans 362 residues: MRPAHAVIDLDALRHNYRFARRLGGGKALAVVKADAYGHGAVRCAQALEAEVDGFAVACIEEALELRQAGIQAPILLLEGFFEAEELELIAKHNLWTVIASSWQVRALAAFHSPSPIGVWLKLDSGMHRLGLEPKEFRDAWMSLHRLPQVGEIVLMTHLARADELDNPRTNEQASVFAQASQGMVAPASVCNSSGLLGWAGLYSDWGRPGLMLYGVNPIPQESTSLSGPLRPVMMVYSRLIAVHELPAGEPVGYGACFVTERPTRVGVVAMGYADGYPYFAVNGTPLLVDGRVCPLIGRVSMDMLTVDLTDHPQADVGSQVQLWGVQPGVAELAAHCNLSAYQLLCGLKRVRRYYLGEMGAV.

K33 functions as the Proton acceptor; specific for D-alanine in the catalytic mechanism. K33 is subject to N6-(pyridoxal phosphate)lysine. Residue R129 coordinates substrate. The Proton acceptor; specific for L-alanine role is filled by Y254. M302 serves as a coordination point for substrate.

Belongs to the alanine racemase family. Pyridoxal 5'-phosphate is required as a cofactor.

It carries out the reaction L-alanine = D-alanine. Its pathway is amino-acid biosynthesis; D-alanine biosynthesis; D-alanine from L-alanine: step 1/1. Its function is as follows. Catalyzes the interconversion of L-alanine and D-alanine. May also act on other amino acids. The chain is Alanine racemase (alr) from Xylella fastidiosa (strain 9a5c).